An 88-amino-acid polypeptide reads, in one-letter code: MKKFQAVIKDPVGIHARPASILASEASKFKSELKLVAPSGVEGNIKSIINLMSLGIRHNDNITIKADGADEEEALAAIKACLEKNKVI.

One can recognise an HPr domain in the interval 1–88 (MKKFQAVIKD…KACLEKNKVI (88 aa)). His-15 (pros-phosphohistidine intermediate) is an active-site residue. At Ser-47 the chain carries Phosphoserine; by HPrK/P.

This sequence belongs to the HPr family.

The protein resides in the cytoplasm. With respect to regulation, phosphorylation on Ser-47 inhibits the phosphoryl transfer from enzyme I to HPr. Functionally, general (non sugar-specific) component of the phosphoenolpyruvate-dependent sugar phosphotransferase system (sugar PTS). This major carbohydrate active-transport system catalyzes the phosphorylation of incoming sugar substrates concomitantly with their translocation across the cell membrane. The phosphoryl group from phosphoenolpyruvate (PEP) is transferred to the phosphoryl carrier protein HPr by enzyme I. Phospho-HPr then transfers it to the PTS EIIA domain. In terms of biological role, P-Ser-HPr interacts with the catabolite control protein A (CcpA), forming a complex that binds to DNA at the catabolite response elements cre, operator sites preceding a large number of catabolite-regulated genes. Thus, P-Ser-HPr is a corepressor in carbon catabolite repression (CCR), a mechanism that allows bacteria to coordinate and optimize the utilization of available carbon sources. P-Ser-HPr also plays a role in inducer exclusion, in which it probably interacts with several non-PTS permeases and inhibits their transport activity. This chain is Phosphocarrier protein HPr (ptsH), found in Mycoplasma genitalium (strain ATCC 33530 / DSM 19775 / NCTC 10195 / G37) (Mycoplasmoides genitalium).